We begin with the raw amino-acid sequence, 125 residues long: Large ribosomal subunit protein bL12 (125 aa).

This sequence belongs to the bacterial ribosomal protein bL12 family. As to quaternary structure, homodimer. Part of the ribosomal stalk of the 50S ribosomal subunit. Forms a multimeric L10(L12)X complex, where L10 forms an elongated spine to which 2 to 4 L12 dimers bind in a sequential fashion. Binds GTP-bound translation factors.

In terms of biological role, forms part of the ribosomal stalk which helps the ribosome interact with GTP-bound translation factors. Is thus essential for accurate translation. This Afipia carboxidovorans (strain ATCC 49405 / DSM 1227 / KCTC 32145 / OM5) (Oligotropha carboxidovorans) protein is Large ribosomal subunit protein bL12.